A 258-amino-acid chain; its full sequence is Undecaprenyl-diphosphatase (258 aa).

Helical transmembrane passes span 14-34, 39-59, 79-99, 106-126, 136-156, 176-196, 209-229, and 237-257; these read AAGEFLPISSSAHLVLMPWLL, QGLTYDIFLHLATLIAVLIYF, GKILWLLVLGTIPAAICGVLF, VFRSPFVIAAALIVFAVILHL, VALNVKTVLIIGCAQALALMP, AESAKISFLLSTPIIAGAAVL, AFIAGFLTAAIFGWLFIKFLM, and FNIFVVYRIALGVIIIITALM.

It belongs to the UppP family.

The protein resides in the cell membrane. The catalysed reaction is di-trans,octa-cis-undecaprenyl diphosphate + H2O = di-trans,octa-cis-undecaprenyl phosphate + phosphate + H(+). Functionally, catalyzes the dephosphorylation of undecaprenyl diphosphate (UPP). Confers resistance to bacitracin. The chain is Undecaprenyl-diphosphatase from Elusimicrobium minutum (strain Pei191).